We begin with the raw amino-acid sequence, 425 residues long: UDP-N-acetylglucosamine 1-carboxyvinyltransferase (425 aa).

Phosphoenolpyruvate is bound at residue 22–23 (KN). R93 lines the UDP-N-acetyl-alpha-D-glucosamine pocket. C117 functions as the Proton donor in the catalytic mechanism. At C117 the chain carries 2-(S-cysteinyl)pyruvic acid O-phosphothioketal. Residues 122–126 (RPIDL), D307, and V329 each bind UDP-N-acetyl-alpha-D-glucosamine.

Belongs to the EPSP synthase family. MurA subfamily.

Its subcellular location is the cytoplasm. It carries out the reaction phosphoenolpyruvate + UDP-N-acetyl-alpha-D-glucosamine = UDP-N-acetyl-3-O-(1-carboxyvinyl)-alpha-D-glucosamine + phosphate. It participates in cell wall biogenesis; peptidoglycan biosynthesis. In terms of biological role, cell wall formation. Adds enolpyruvyl to UDP-N-acetylglucosamine. The sequence is that of UDP-N-acetylglucosamine 1-carboxyvinyltransferase from Prosthecochloris aestuarii (strain DSM 271 / SK 413).